The primary structure comprises 80 residues: Small ribosomal subunit protein bS18 (80 aa).

Belongs to the bacterial ribosomal protein bS18 family. As to quaternary structure, part of the 30S ribosomal subunit. Forms a tight heterodimer with protein bS6.

Binds as a heterodimer with protein bS6 to the central domain of the 16S rRNA, where it helps stabilize the platform of the 30S subunit. The polypeptide is Small ribosomal subunit protein bS18 (Acholeplasma laidlawii (strain PG-8A)).